The chain runs to 201 residues: LexA repressor (201 aa).

Residues 28–48 (RAEIAARLGFRSPNAAEEHLK) constitute a DNA-binding region (H-T-H motif). Catalysis depends on for autocatalytic cleavage activity residues serine 118 and lysine 155.

The protein belongs to the peptidase S24 family. Homodimer.

The enzyme catalyses Hydrolysis of Ala-|-Gly bond in repressor LexA.. Its function is as follows. Represses a number of genes involved in the response to DNA damage (SOS response), including recA and lexA. In the presence of single-stranded DNA, RecA interacts with LexA causing an autocatalytic cleavage which disrupts the DNA-binding part of LexA, leading to derepression of the SOS regulon and eventually DNA repair. This chain is LexA repressor, found in Photorhabdus laumondii subsp. laumondii (strain DSM 15139 / CIP 105565 / TT01) (Photorhabdus luminescens subsp. laumondii).